Here is a 347-residue protein sequence, read N- to C-terminus: S-adenosylmethionine:tRNA ribosyltransferase-isomerase (347 aa).

It belongs to the QueA family. In terms of assembly, monomer.

It localises to the cytoplasm. It catalyses the reaction 7-aminomethyl-7-carbaguanosine(34) in tRNA + S-adenosyl-L-methionine = epoxyqueuosine(34) in tRNA + adenine + L-methionine + 2 H(+). It participates in tRNA modification; tRNA-queuosine biosynthesis. Functionally, transfers and isomerizes the ribose moiety from AdoMet to the 7-aminomethyl group of 7-deazaguanine (preQ1-tRNA) to give epoxyqueuosine (oQ-tRNA). This Bordetella bronchiseptica (strain ATCC BAA-588 / NCTC 13252 / RB50) (Alcaligenes bronchisepticus) protein is S-adenosylmethionine:tRNA ribosyltransferase-isomerase.